Consider the following 204-residue polypeptide: Guanylate kinase (204 aa).

The region spanning 1–182 is the Guanylate kinase-like domain; it reads MLYIISAPSG…ALSDLNTIIC (182 aa). 7–14 provides a ligand contact to ATP; that stretch reads APSGTGKS.

It belongs to the guanylate kinase family.

It localises to the cytoplasm. It catalyses the reaction GMP + ATP = GDP + ADP. Its function is as follows. Essential for recycling GMP and indirectly, cGMP. This is Guanylate kinase from Baumannia cicadellinicola subsp. Homalodisca coagulata.